The primary structure comprises 452 residues: Phosphoglucosamine mutase (452 aa).

Residue S97 is the Phosphoserine intermediate of the active site. Residues S97, D236, D238, and D240 each coordinate Mg(2+). The residue at position 97 (S97) is a Phosphoserine.

It belongs to the phosphohexose mutase family. The cofactor is Mg(2+). Post-translationally, activated by phosphorylation.

The catalysed reaction is alpha-D-glucosamine 1-phosphate = D-glucosamine 6-phosphate. Its function is as follows. Catalyzes the conversion of glucosamine-6-phosphate to glucosamine-1-phosphate. The sequence is that of Phosphoglucosamine mutase from Prochlorococcus marinus subsp. pastoris (strain CCMP1986 / NIES-2087 / MED4).